Here is a 148-residue protein sequence, read N- to C-terminus: Single-stranded DNA-binding protein 2 (148 aa).

An SSB domain is found at 4 to 109 (INSVIIAGNL…IKARRIQFLN (106 aa)).

As to quaternary structure, homotetramer.

This Chlorobaculum tepidum (strain ATCC 49652 / DSM 12025 / NBRC 103806 / TLS) (Chlorobium tepidum) protein is Single-stranded DNA-binding protein 2 (ssb2).